The sequence spans 1182 residues: uncharacterized protein (1182 aa).

The chain crosses the membrane as a helical span at residues 618–638; it reads GSSSLVCSVMVVIFSIILYYL.

It is found in the host membrane. This is an uncharacterized protein from Callospermophilus lateralis (Golden-mantled ground squirrel).